The following is a 93-amino-acid chain: Phosphoribosyl-ATP pyrophosphatase (93 aa).

The protein belongs to the PRA-PH family.

The protein localises to the cytoplasm. It catalyses the reaction 1-(5-phospho-beta-D-ribosyl)-ATP + H2O = 1-(5-phospho-beta-D-ribosyl)-5'-AMP + diphosphate + H(+). It participates in amino-acid biosynthesis; L-histidine biosynthesis; L-histidine from 5-phospho-alpha-D-ribose 1-diphosphate: step 2/9. The chain is Phosphoribosyl-ATP pyrophosphatase from Rhodococcus erythropolis (strain PR4 / NBRC 100887).